Consider the following 532-residue polypeptide: Flavin-containing monooxygenase 3 (532 aa).

FAD contacts are provided by residues 9–13 (GAGVS), Glu32, 40–41 (LW), and 61–62 (NS). NADP(+) is bound by residues 60–61 (SN) and 195–198 (SGCD). Ser401 carries the post-translational modification Phosphoserine. The helical transmembrane segment at 510–530 (FFFHWLKLFAIPILLIAVFLV) threads the bilayer.

Belongs to the FMO family. FAD is required as a cofactor. Liver.

Its subcellular location is the microsome membrane. The protein localises to the endoplasmic reticulum membrane. It carries out the reaction trimethylamine + NADPH + O2 = trimethylamine N-oxide + NADP(+) + H2O. The catalysed reaction is N,N-dimethylaniline + NADPH + O2 + H(+) = N,N-dimethylaniline N-oxide + NADP(+) + H2O. The enzyme catalyses hypotaurine + NADPH + O2 + H(+) = taurine + NADP(+) + H2O. It catalyses the reaction (S)-nicotine + NADPH + O2 = trans-(S)-nicotine N(1')-oxide + NADP(+) + H2O. It carries out the reaction albendazole + NADPH + O2 + H(+) = albendazole S-oxide + NADP(+) + H2O. In terms of biological role, essential hepatic enzyme that catalyzes the oxygenation of a wide variety of nitrogen- and sulfur-containing compounds including drugs as well as dietary compounds. Plays an important role in the metabolism of trimethylamine (TMA), via the production of trimethylamine N-oxide (TMAO) metabolite. TMA is generated by the action of gut microbiota using dietary precursors such as choline, choline containing compounds, betaine or L-carnitine. By regulating TMAO concentration, FMO3 directly impacts both platelet responsiveness and rate of thrombus formation. In Homo sapiens (Human), this protein is Flavin-containing monooxygenase 3 (FMO3).